Here is a 678-residue protein sequence, read N- to C-terminus: Probable N-methylproline demethylase (678 aa).

Residues Gly-59, Gln-102, Arg-220, Lys-299, and 321–322 (TR) contribute to the FMN site. Residues Cys-345, Cys-351, and Cys-363 each coordinate [4Fe-4S] cluster. FAD is bound by residues Ala-396, Glu-415, Gln-423, Arg-433, and Ala-460.

This sequence in the N-terminal section; belongs to the NADH:flavin oxidoreductase/NADH oxidase family. The cofactor is FMN. It depends on FAD as a cofactor. [4Fe-4S] cluster is required as a cofactor.

It carries out the reaction N-methyl-L-proline + NAD(+) + H2O = L-proline + formaldehyde + NADH + H(+). It functions in the pathway amine and polyamine degradation; stachydrine degradation. Possible NADH-dependent oxidase, may function as a demethylase that converts N-methylproline to proline. The polypeptide is Probable N-methylproline demethylase (Rhizobium meliloti (strain 1021) (Ensifer meliloti)).